The chain runs to 230 residues: Lipoprotein-releasing system ATP-binding protein LolD (230 aa).

The region spanning 6-230 (LQASNLEKEY…GHFILPSETL (225 aa)) is the ABC transporter domain. An ATP-binding site is contributed by 42 to 49 (GSSGSGKS).

This sequence belongs to the ABC transporter superfamily. Lipoprotein translocase (TC 3.A.1.125) family. In terms of assembly, the complex is composed of two ATP-binding proteins (LolD) and two transmembrane proteins (LolC and LolE).

The protein resides in the cell inner membrane. Functionally, part of the ABC transporter complex LolCDE involved in the translocation of mature outer membrane-directed lipoproteins, from the inner membrane to the periplasmic chaperone, LolA. Responsible for the formation of the LolA-lipoprotein complex in an ATP-dependent manner. This Hydrogenovibrio crunogenus (strain DSM 25203 / XCL-2) (Thiomicrospira crunogena) protein is Lipoprotein-releasing system ATP-binding protein LolD.